We begin with the raw amino-acid sequence, 185 residues long: Elongation factor P (185 aa).

The protein belongs to the elongation factor P family.

The protein localises to the cytoplasm. The protein operates within protein biosynthesis; polypeptide chain elongation. In terms of biological role, involved in peptide bond synthesis. Stimulates efficient translation and peptide-bond synthesis on native or reconstituted 70S ribosomes in vitro. Probably functions indirectly by altering the affinity of the ribosome for aminoacyl-tRNA, thus increasing their reactivity as acceptors for peptidyl transferase. This Clostridium botulinum (strain Alaska E43 / Type E3) protein is Elongation factor P.